Consider the following 172-residue polypeptide: Signal peptidase complex catalytic subunit SEC11 (172 aa).

The Cytoplasmic portion of the chain corresponds to 1-14; that stretch reads MLSSLANPRQAASQ. Residues 15-35 traverse the membrane as a helical; Signal-anchor for type II membrane protein segment; the sequence is LLNFALILSTAFMMWKGLSVV. At 36 to 172 the chain is on the lumenal side; sequence SDSPSPIVVV…MGLVVVLQRE (137 aa). Catalysis depends on charge relay system residues S49, H90, and D115. The segment at 158–169 is C-terminal short (CTS) helix; the sequence is AMLGIMGLVVVL.

Belongs to the peptidase S26B family. In terms of assembly, component of the signal peptidase complex (SPC) composed of a catalytic subunit SEC11 and three accessory subunits SPC1, SPC2 and SPC3. The complex induces a local thinning of the ER membrane which is used to measure the length of the signal peptide (SP) h-region of protein substrates. This ensures the selectivity of the complex towards h-regions shorter than 18-20 amino acids. SPC associates with the translocon complex.

It is found in the endoplasmic reticulum membrane. The enzyme catalyses Cleavage of hydrophobic, N-terminal signal or leader sequences from secreted and periplasmic proteins.. Functionally, catalytic component of the signal peptidase complex (SPC) which catalyzes the cleavage of N-terminal signal sequences from nascent proteins as they are translocated into the lumen of the endoplasmic reticulum. Specifically cleaves N-terminal signal peptides that contain a hydrophobic alpha-helix (h-region) shorter than 18-20 amino acids. The sequence is that of Signal peptidase complex catalytic subunit SEC11 (SEC11) from Colletotrichum graminicola (strain M1.001 / M2 / FGSC 10212) (Maize anthracnose fungus).